We begin with the raw amino-acid sequence, 280 residues long: Undecaprenyl-diphosphatase (280 aa).

A run of 8 helical transmembrane segments spans residues 2–22 (FIIE…TEWL), 45–65 (AFME…VVVI), 86–106 (WQLW…GLFL), 114–134 (FYNL…FIYL), 147–167 (LASL…LALF), 188–208 (SVVT…ASGW), 223–243 (GQIF…LVVI), and 255–275 (FTIF…YAAI).

The protein belongs to the UppP family.

Its subcellular location is the cell membrane. It catalyses the reaction di-trans,octa-cis-undecaprenyl diphosphate + H2O = di-trans,octa-cis-undecaprenyl phosphate + phosphate + H(+). Its function is as follows. Catalyzes the dephosphorylation of undecaprenyl diphosphate (UPP). Confers resistance to bacitracin. The polypeptide is Undecaprenyl-diphosphatase (Streptococcus sanguinis (strain SK36)).